Reading from the N-terminus, the 283-residue chain is Phosphatidylserine decarboxylase proenzyme (283 aa).

Catalysis depends on charge relay system; for autoendoproteolytic cleavage activity residues aspartate 96, histidine 152, and serine 250. Serine 250 (schiff-base intermediate with substrate; via pyruvic acid; for decarboxylase activity) is an active-site residue. Serine 250 carries the post-translational modification Pyruvic acid (Ser); by autocatalysis.

The protein belongs to the phosphatidylserine decarboxylase family. PSD-B subfamily. Prokaryotic type I sub-subfamily. Heterodimer of a large membrane-associated beta subunit and a small pyruvoyl-containing alpha subunit. The cofactor is pyruvate. Post-translationally, is synthesized initially as an inactive proenzyme. Formation of the active enzyme involves a self-maturation process in which the active site pyruvoyl group is generated from an internal serine residue via an autocatalytic post-translational modification. Two non-identical subunits are generated from the proenzyme in this reaction, and the pyruvate is formed at the N-terminus of the alpha chain, which is derived from the carboxyl end of the proenzyme. The autoendoproteolytic cleavage occurs by a canonical serine protease mechanism, in which the side chain hydroxyl group of the serine supplies its oxygen atom to form the C-terminus of the beta chain, while the remainder of the serine residue undergoes an oxidative deamination to produce ammonia and the pyruvoyl prosthetic group on the alpha chain. During this reaction, the Ser that is part of the protease active site of the proenzyme becomes the pyruvoyl prosthetic group, which constitutes an essential element of the active site of the mature decarboxylase.

It localises to the cell membrane. The catalysed reaction is a 1,2-diacyl-sn-glycero-3-phospho-L-serine + H(+) = a 1,2-diacyl-sn-glycero-3-phosphoethanolamine + CO2. The protein operates within phospholipid metabolism; phosphatidylethanolamine biosynthesis; phosphatidylethanolamine from CDP-diacylglycerol: step 2/2. Its function is as follows. Catalyzes the formation of phosphatidylethanolamine (PtdEtn) from phosphatidylserine (PtdSer). The sequence is that of Phosphatidylserine decarboxylase proenzyme from Acinetobacter baumannii (strain SDF).